Consider the following 477-residue polypeptide: Glycogen synthase (477 aa).

An ADP-alpha-D-glucose-binding site is contributed by Lys-15.

The protein belongs to the glycosyltransferase 1 family. Bacterial/plant glycogen synthase subfamily.

It catalyses the reaction [(1-&gt;4)-alpha-D-glucosyl](n) + ADP-alpha-D-glucose = [(1-&gt;4)-alpha-D-glucosyl](n+1) + ADP + H(+). Its pathway is glycan biosynthesis; glycogen biosynthesis. In terms of biological role, synthesizes alpha-1,4-glucan chains using ADP-glucose. In Escherichia coli O139:H28 (strain E24377A / ETEC), this protein is Glycogen synthase.